The chain runs to 26 residues: SPAPPACDPRLLNKLLRDDHVLHGRL.

It belongs to the EPO/TPO family.

The protein localises to the secreted. Lineage-specific cytokine affecting the proliferation and maturation of megakaryocytes from their committed progenitor cells. It acts at a late stage of megakaryocyte development. It may be the major physiological regulator of circulating platelets. The protein is Thrombopoietin (THPO) of Sus scrofa (Pig).